The primary structure comprises 720 residues: Calpain-12 (720 aa).

In terms of domain architecture, Calpain catalytic spans 45–341 (LFRDPCFPAG…FNTVQICSLS (297 aa)). Catalysis depends on residues Cys-105, His-259, and Asn-283. Positions 342–541 (PEVLGPSPAG…DDVISADLDA (200 aa)) are domain III. Residues 393 to 403 (DEEEDDDDEEG) show a composition bias toward acidic residues. The disordered stretch occupies residues 393–415 (DEEEDDDDEEGPWGGWGAAGARG). A domain IV region spans residues 542-720 (LQAPYKPLEL…KQWSEVATFS (179 aa)). The region spanning 621–656 (GHLMSWQATFDKFDEDASGTMNSCELRLALTAAGFH) is the EF-hand domain. Residues Asp-634, Asp-636, Ser-638, Thr-640, and Glu-645 each coordinate Ca(2+).

Belongs to the peptidase C2 family. In terms of tissue distribution, expression localized to the cortex of the hair follicle during the anagen phase of hair cycle.

In terms of biological role, calcium-regulated non-lysosomal thiol-protease. This chain is Calpain-12 (Capn12), found in Mus musculus (Mouse).